Consider the following 220-residue polypeptide: Deoxyribose-phosphate aldolase (220 aa).

The Proton donor/acceptor role is filled by aspartate 89. The Schiff-base intermediate with acetaldehyde role is filled by lysine 151. The Proton donor/acceptor role is filled by lysine 180.

The protein belongs to the DeoC/FbaB aldolase family. DeoC type 1 subfamily.

It localises to the cytoplasm. It carries out the reaction 2-deoxy-D-ribose 5-phosphate = D-glyceraldehyde 3-phosphate + acetaldehyde. The protein operates within carbohydrate degradation; 2-deoxy-D-ribose 1-phosphate degradation; D-glyceraldehyde 3-phosphate and acetaldehyde from 2-deoxy-alpha-D-ribose 1-phosphate: step 2/2. In terms of biological role, catalyzes a reversible aldol reaction between acetaldehyde and D-glyceraldehyde 3-phosphate to generate 2-deoxy-D-ribose 5-phosphate. The polypeptide is Deoxyribose-phosphate aldolase (Streptococcus pneumoniae (strain CGSP14)).